The primary structure comprises 287 residues: Energy-coupling factor transporter ATP-binding protein EcfA2 (287 aa).

In terms of domain architecture, ABC transporter spans 3–245 (IKFENVSYVY…SEWLQKHHLA (243 aa)). 40-47 (GHTGSGKS) is an ATP binding site.

Belongs to the ABC transporter superfamily. Energy-coupling factor EcfA family. In terms of assembly, forms a stable energy-coupling factor (ECF) transporter complex composed of 2 membrane-embedded substrate-binding proteins (S component), 2 ATP-binding proteins (A component) and 2 transmembrane proteins (T component).

The protein resides in the cell membrane. ATP-binding (A) component of a common energy-coupling factor (ECF) ABC-transporter complex. Unlike classic ABC transporters this ECF transporter provides the energy necessary to transport a number of different substrates. In Lactobacillus delbrueckii subsp. bulgaricus (strain ATCC 11842 / DSM 20081 / BCRC 10696 / JCM 1002 / NBRC 13953 / NCIMB 11778 / NCTC 12712 / WDCM 00102 / Lb 14), this protein is Energy-coupling factor transporter ATP-binding protein EcfA2.